Consider the following 463-residue polypeptide: Glycine--tRNA ligase (463 aa).

2 residues coordinate substrate: Arg102 and Glu165. Residues 197–199, 207–212, 284–285, and 328–331 each bind ATP; these read RNE, FRTREF, EL, and GLTR. Residue 212–216 coordinates substrate; the sequence is FEQME. 324-328 contacts substrate; sequence EPAAG.

Belongs to the class-II aminoacyl-tRNA synthetase family. As to quaternary structure, homodimer.

The protein localises to the cytoplasm. It carries out the reaction tRNA(Gly) + glycine + ATP = glycyl-tRNA(Gly) + AMP + diphosphate. Its function is as follows. Catalyzes the attachment of glycine to tRNA(Gly). In Mycobacterium bovis (strain ATCC BAA-935 / AF2122/97), this protein is Glycine--tRNA ligase.